The following is a 379-amino-acid chain: Protein trichome birefringence-like 36 (379 aa).

The chain crosses the membrane as a helical; Signal-anchor for type II membrane protein span at residues 8–24 (VLFLSLCLILGKVVLSQ). Positions 123–125 (GDS) match the GDS motif motif. The short motif at 353-367 (DCSHWCLPGVPDIWN) is the DCXHWCLPGXXDXWN motif element.

Belongs to the PC-esterase family. TBL subfamily.

It localises to the membrane. Its function is as follows. May act as a bridging protein that binds pectin and other cell wall polysaccharides. Probably involved in maintaining esterification of pectins. May be involved in the specific O-acetylation of cell wall polymers. This is Protein trichome birefringence-like 36 (TBL36) from Arabidopsis thaliana (Mouse-ear cress).